A 103-amino-acid polypeptide reads, in one-letter code: uncharacterized protein (103 aa).

This is an uncharacterized protein from Escherichia coli (strain UTI89 / UPEC).